The following is a 544-amino-acid chain: Chaperonin GroEL (544 aa).

Residues 30-33 (TLGP), lysine 51, 87-91 (DGTTT), glycine 415, and aspartate 495 each bind ATP.

The protein belongs to the chaperonin (HSP60) family. In terms of assembly, forms a cylinder of 14 subunits composed of two heptameric rings stacked back-to-back. Interacts with the co-chaperonin GroES.

The protein localises to the cytoplasm. It carries out the reaction ATP + H2O + a folded polypeptide = ADP + phosphate + an unfolded polypeptide.. In terms of biological role, together with its co-chaperonin GroES, plays an essential role in assisting protein folding. The GroEL-GroES system forms a nano-cage that allows encapsulation of the non-native substrate proteins and provides a physical environment optimized to promote and accelerate protein folding. The protein is Chaperonin GroEL of Aeromonas salmonicida.